A 333-amino-acid polypeptide reads, in one-letter code: Low specificity L-threonine aldolase (333 aa).

N6-(pyridoxal phosphate)lysine is present on K197.

The protein belongs to the threonine aldolase family. In terms of assembly, homotetramer. Requires pyridoxal 5'-phosphate as cofactor.

It carries out the reaction L-threonine = acetaldehyde + glycine. The enzyme catalyses L-allo-threonine = acetaldehyde + glycine. Catalyzes the cleavage of L-allo-threonine and L-threonine to glycine and acetaldehyde. L-threo-phenylserine and L-erythro-phenylserine are also good substrates. The sequence is that of Low specificity L-threonine aldolase (ltaE) from Escherichia coli (strain K12).